The sequence spans 258 residues: Spindlin-2 (258 aa).

The tract at residues 1-47 is disordered; it reads MKTPHKKATARQQTREIVDDHTLSASMRKKKISQKKQRGRPSSQTRR. The segment covering 13–22 has biased composition (basic and acidic residues); sequence QTREIVDDHT. A compositionally biased stretch (basic residues) spans 27–39; sequence MRKKKISQKKQRG. Tudor-like domain stretches follow at residues 50–99, 129–178, and 210–255; these read VGCR…LELH, IGKA…YQLL, and IGKH…YDLV. Histone H3K4me3 and H3R8me2a binding stretches follow at residues Glu-138 and 246–248; that span reads DFH.

Belongs to the SPIN/STSY family. In terms of assembly, interacts with C11orf84/SPINDOC.

The protein localises to the nucleus. May be involved in the regulation of cell cycle progression. Exhibits H3K4me3-binding activity. This is Spindlin-2 (SPIN2) from Bos taurus (Bovine).